The following is a 963-amino-acid chain: Iron-responsive element-binding protein 2 (963 aa).

Residues Cys-512, Cys-578, and Cys-581 each coordinate [4Fe-4S] cluster.

It belongs to the aconitase/IPM isomerase family. Interacts with RBCK1 only in iron-rich conditions. Interacts (when associated with the 4Fe-4S) with FBXL5. Interacts with CIAO1 and CIAO2A. It depends on [4Fe-4S] cluster as a cofactor. In terms of processing, ubiquitinated and degraded by the proteasome in presence of high level of iron and oxygen. Ubiquitinated by a SCF complex containing FBXL5. Upon iron and oxygen depletion FBXL5 is degraded, preventing ubiquitination and allowing its RNA-binding activity. In terms of tissue distribution, ubiquitously expressed in rat tissues, the highest amounts present in skeletal muscle and heart.

It localises to the cytoplasm. Functionally, RNA-binding protein that binds to iron-responsive elements (IRES), which are stem-loop structures found in the 5'-UTR of ferritin, and delta aminolevulinic acid synthase mRNAs, and in the 3'-UTR of transferrin receptor mRNA. Binding to the IRE element in ferritin results in the repression of its mRNA translation. Binding of the protein to the transferrin receptor mRNA inhibits the degradation of this otherwise rapidly degraded mRNA. The sequence is that of Iron-responsive element-binding protein 2 (Ireb2) from Rattus norvegicus (Rat).